The chain runs to 176 residues: Transcription termination/antitermination protein NusG (176 aa).

Residues 125 to 149 enclose the KOW domain; sequence GEVVRVVEGPFANFTATVEEYDVEH.

This sequence belongs to the NusG family.

Functionally, participates in transcription elongation, termination and antitermination. The protein is Transcription termination/antitermination protein NusG of Helicobacter pylori (strain ATCC 700392 / 26695) (Campylobacter pylori).